We begin with the raw amino-acid sequence, 457 residues long: Angiopoietin-related protein 6 (457 aa).

Positions methionine 1–alanine 24 are cleaved as a signal peptide. Coiled-coil stretches lie at residues aspartate 51–glutamate 77 and leucine 126–serine 164. The interval serine 201 to alanine 235 is disordered. Asparagine 202 carries N-linked (GlcNAc...) asparagine glycosylation. Basic and acidic residues predominate over residues arginine 205–serine 218. Residues leucine 219–leucine 229 are compositionally biased toward polar residues. The Fibrinogen C-terminal domain occupies threonine 238–arginine 456. 2 disulfides stabilise this stretch: cysteine 247-cysteine 274 and cysteine 397-cysteine 410.

In terms of tissue distribution, highly expressed in the liver, specifically in hepatocytes, and weakly in the heart. Expressed in hematopoietic cells, platelets and mast cells, and detected at wounded skin.

Its subcellular location is the secreted. Functionally, may play a role in the wound healing process. May promote epidermal proliferation, remodeling and regeneration. May promote the chemotactic activity of endothelial cells and induce neovascularization. May counteract high-fat diet-induced obesity and related insulin resistance through increased energy expenditure. The chain is Angiopoietin-related protein 6 (Angptl6) from Mus musculus (Mouse).